The chain runs to 159 residues: Protein Smg homolog (159 aa).

It belongs to the Smg family.

The protein is Protein Smg homolog of Vibrio parahaemolyticus serotype O3:K6 (strain RIMD 2210633).